We begin with the raw amino-acid sequence, 343 residues long: N-acetyl-gamma-glutamyl-phosphate reductase (343 aa).

Residue Cys149 is part of the active site.

It belongs to the NAGSA dehydrogenase family. Type 1 subfamily.

Its subcellular location is the cytoplasm. It carries out the reaction N-acetyl-L-glutamate 5-semialdehyde + phosphate + NADP(+) = N-acetyl-L-glutamyl 5-phosphate + NADPH + H(+). Its pathway is amino-acid biosynthesis; L-arginine biosynthesis; N(2)-acetyl-L-ornithine from L-glutamate: step 3/4. Catalyzes the NADPH-dependent reduction of N-acetyl-5-glutamyl phosphate to yield N-acetyl-L-glutamate 5-semialdehyde. The sequence is that of N-acetyl-gamma-glutamyl-phosphate reductase from Methanococcus maripaludis (strain C6 / ATCC BAA-1332).